Reading from the N-terminus, the 64-residue chain is KILYLLFAFLFLAFLSEPGNAYKRCHIKGGHCFPKEKICIPPSSDFGKMDCPWRRKSLKKGSGK.

An N-terminal signal peptide occupies residues 1-21 (KILYLLFAFLFLAFLSEPGNA). C32 and C51 are oxidised to a cystine.

This sequence belongs to the crotamine-myotoxin family. As to quaternary structure, monomer. As to expression, expressed by the venom gland.

It localises to the secreted. Its function is as follows. Cationic peptide that possesses multiple functions. It acts as a cell-penetrating peptide (CPP), and as a potent voltage-gated potassium channel (Kv) inhibitor. It exhibits antimicrobial activities, hind limb paralysis, and severe muscle necrosis by a non-enzymatic mechanism. The polypeptide is Myotoxin-2 (Crotalus durissus terrificus (South American rattlesnake)).